We begin with the raw amino-acid sequence, 185 residues long: Ribosome-recycling factor (185 aa).

Belongs to the RRF family.

The protein resides in the cytoplasm. Functionally, responsible for the release of ribosomes from messenger RNA at the termination of protein biosynthesis. May increase the efficiency of translation by recycling ribosomes from one round of translation to another. This Haemophilus influenzae (strain ATCC 51907 / DSM 11121 / KW20 / Rd) protein is Ribosome-recycling factor.